Here is a 452-residue protein sequence, read N- to C-terminus: Phosphoglucosamine mutase (452 aa).

The active-site Phosphoserine intermediate is the S108. Mg(2+)-binding residues include S108, D247, D249, and D251. S108 carries the phosphoserine modification.

It belongs to the phosphohexose mutase family. Requires Mg(2+) as cofactor. Post-translationally, activated by phosphorylation.

It carries out the reaction alpha-D-glucosamine 1-phosphate = D-glucosamine 6-phosphate. Functionally, catalyzes the conversion of glucosamine-6-phosphate to glucosamine-1-phosphate. The polypeptide is Phosphoglucosamine mutase (Burkholderia pseudomallei (strain K96243)).